The primary structure comprises 101 residues: Aspartyl/glutamyl-tRNA(Asn/Gln) amidotransferase subunit C (101 aa).

It belongs to the GatC family. In terms of assembly, heterotrimer of A, B and C subunits.

The enzyme catalyses L-glutamyl-tRNA(Gln) + L-glutamine + ATP + H2O = L-glutaminyl-tRNA(Gln) + L-glutamate + ADP + phosphate + H(+). It carries out the reaction L-aspartyl-tRNA(Asn) + L-glutamine + ATP + H2O = L-asparaginyl-tRNA(Asn) + L-glutamate + ADP + phosphate + 2 H(+). In terms of biological role, allows the formation of correctly charged Asn-tRNA(Asn) or Gln-tRNA(Gln) through the transamidation of misacylated Asp-tRNA(Asn) or Glu-tRNA(Gln) in organisms which lack either or both of asparaginyl-tRNA or glutaminyl-tRNA synthetases. The reaction takes place in the presence of glutamine and ATP through an activated phospho-Asp-tRNA(Asn) or phospho-Glu-tRNA(Gln). This Lactococcus lactis subsp. cremoris (strain MG1363) protein is Aspartyl/glutamyl-tRNA(Asn/Gln) amidotransferase subunit C.